The chain runs to 231 residues: GSK-3-binding protein FRAT2 (231 aa).

Disordered regions lie at residues M1–F24 and D53–V109. Acidic residues predominate over residues E7 to S23. Positions D172–L194 are involved in GSK-3 binding. Residues A203–L231 form a disordered region.

This sequence belongs to the GSK-3-binding protein family. As to quaternary structure, binds GSK-3 and prevents GSK-3-dependent phosphorylation.

In terms of biological role, positively regulates the Wnt signaling pathway by stabilizing beta-catenin through the association with GSK-3. The sequence is that of GSK-3-binding protein FRAT2 (Frat2) from Mus musculus (Mouse).